The sequence spans 61 residues: Short neurotoxin 2 (61 aa).

4 cysteine pairs are disulfide-bonded: Cys-3–Cys-23, Cys-17–Cys-40, Cys-42–Cys-53, and Cys-54–Cys-59.

The protein belongs to the three-finger toxin family. Short-chain subfamily. Type I alpha-neurotoxin sub-subfamily. As to expression, expressed by the venom gland.

It localises to the secreted. In terms of biological role, binds to muscle nicotinic acetylcholine receptor (nAChR) and inhibit acetylcholine from binding to the receptor, thereby impairing neuromuscular transmission. The sequence is that of Short neurotoxin 2 from Naja annulifera (Banded Egyptian cobra).